The following is a 240-amino-acid chain: Ubiquinone biosynthesis O-methyltransferase (240 aa).

The S-adenosyl-L-methionine site is built by R44, G64, D85, and M129.

The protein belongs to the methyltransferase superfamily. UbiG/COQ3 family.

It catalyses the reaction a 3-demethylubiquinol + S-adenosyl-L-methionine = a ubiquinol + S-adenosyl-L-homocysteine + H(+). The catalysed reaction is a 3-(all-trans-polyprenyl)benzene-1,2-diol + S-adenosyl-L-methionine = a 2-methoxy-6-(all-trans-polyprenyl)phenol + S-adenosyl-L-homocysteine + H(+). It participates in cofactor biosynthesis; ubiquinone biosynthesis. O-methyltransferase that catalyzes the 2 O-methylation steps in the ubiquinone biosynthetic pathway. This Escherichia coli O6:H1 (strain CFT073 / ATCC 700928 / UPEC) protein is Ubiquinone biosynthesis O-methyltransferase.